A 358-amino-acid polypeptide reads, in one-letter code: tRNA-specific 2-thiouridylase MnmA (358 aa).

Residues Ala-6–Ser-13 and Met-32 contribute to the ATP site. Cys-103 serves as the catalytic Nucleophile. An intrachain disulfide couples Cys-103 to Cys-201. Gly-127 contacts ATP. Residues Lys-151–Gln-153 are interaction with tRNA. Cys-201 (cysteine persulfide intermediate) is an active-site residue.

Belongs to the MnmA/TRMU family.

It localises to the cytoplasm. The enzyme catalyses S-sulfanyl-L-cysteinyl-[protein] + uridine(34) in tRNA + AH2 + ATP = 2-thiouridine(34) in tRNA + L-cysteinyl-[protein] + A + AMP + diphosphate + H(+). Catalyzes the 2-thiolation of uridine at the wobble position (U34) of tRNA, leading to the formation of s(2)U34. This chain is tRNA-specific 2-thiouridylase MnmA, found in Thermotoga neapolitana (strain ATCC 49049 / DSM 4359 / NBRC 107923 / NS-E).